Here is a 1157-residue protein sequence, read N- to C-terminus: Endo-1,4-beta-xylanase A (1157 aa).

An N-terminal signal peptide occupies residues 1 to 33 (MMKNNVDRIVSIVTALIMIFGASLFSPPIRVFA). CBM-cenC domains follow at residues 38–189 (INLV…VTTQ) and 195–343 (GNVI…VIGE). Residues 352 to 675 (QNDIPDLYSV…KPAFWAVVDP (324 aa)) form the GH10 domain. Residue Glu495 is the Proton donor of the active site. Asp537 is an active-site residue. The active-site Nucleophile is the Glu600. 2 consecutive SLH domains span residues 1051 to 1114 (KKGV…YSGE) and 1115 to 1157 (FSDV…EMTQ).

It belongs to the glycosyl hydrolase 10 (cellulase F) family.

The catalysed reaction is Endohydrolysis of (1-&gt;4)-beta-D-xylosidic linkages in xylans.. It functions in the pathway glycan degradation; xylan degradation. Its function is as follows. Endo-acting enzyme that randomly cleaves the internal xylosidic linkages of the xylan backbone, yielding xylooligosaccharides of various lengths which are further hydrolyzed to xylose molecules by beta-xylosidase (EC 3.2.1.37). Requires at least three xylose residues for catalytic activity. Does not have activity against xylobiose. The chain is Endo-1,4-beta-xylanase A (xynA) from Thermoanaerobacterium saccharolyticum.